The primary structure comprises 1102 residues: Ubiquitin carboxyl-terminal hydrolase 7 (1102 aa).

Low complexity predominate over residues 1–10 (MNHQQQQQQQ). The interval 1-38 (MNHQQQQQQQKAGEQQLSEPEDMEMEAGDTDDPPRITQ) is disordered. The interaction with TSPYL5 stretch occupies residues 1–208 (MNHQQQQQQQ…APHGVAWDSK (208 aa)). The residue at position 18 (Ser18) is a Phosphoserine. Residues 19-31 (EPEDMEMEAGDTD) are compositionally biased toward acidic residues. The residue at position 49 (Ser49) is a Phosphoserine. Positions 53–208 (NTAEEDMEDD…APHGVAWDSK (156 aa)) are interaction with p53/TP53, MDM2 and EBNA1. The MATH domain occupies 68–195 (EATFQFTVER…DDKVTFEVFV (128 aa)). The necessary for nuclear localization stretch occupies residues 70–205 (TFQFTVERFS…QADAPHGVAW (136 aa)). The USP domain occupies 214–521 (VGLKNQGATC…NAYMLVYIRE (308 aa)). Cys223 acts as the Nucleophile in catalysis. Residue His464 is the Proton acceptor of the active site. Residues 622-801 (LWPMQARSNG…HRVDVIFCDK (180 aa)) form an interaction with ICP0/VMW110 region. Lys869 carries the post-translational modification N6-acetyllysine; alternate. Lys869 is covalently cross-linked (Glycyl lysine isopeptide (Lys-Gly) (interchain with G-Cter in SUMO2); alternate). Lys869 participates in a covalent cross-link: Glycyl lysine isopeptide (Lys-Gly) (interchain with G-Cter in ubiquitin); alternate. A Glycyl lysine isopeptide (Lys-Gly) (interchain with G-Cter in SUMO2) cross-link involves residue Lys882. The residue at position 963 (Ser963) is a Phosphoserine. An N6-acetyllysine mark is found at Lys1084 and Lys1096.

This sequence belongs to the peptidase C19 family. As to quaternary structure, monomer. Homodimer. Part of a complex with DAXX, MDM2, RASSF1 and USP7. Part of a complex with DAXX, MDM2 and USP7. Interacts with MDM2; the interaction is independent of p53/TP53. Interacts with DAXX; the interaction is direct and independent of MDM2 and p53/TP53. Component of a complex composed of KMT2E/MLL5 (isoform 3), OGT (isoform 1) and USP7; the complex stabilizes KMT2E/MLL5, preventing KMT2E/MLL5 ubiquitination and proteasomal-mediated degradation. Interacts (via MATH domain) with KMT2E/MLL5 isoform 3. Interacts with OGT isoform 1. Interacts with FOXO4; the interaction is enhanced in presence of hydrogen peroxide and occurs independently of p53/TP53. Interacts with p53/TP53; the interaction is enhanced in response to DNA damage. Interacts with TSPYL5; this impairs interaction with p53/TP53. Interacts with PTEN; the interaction is direct. Interacts with ATXN1 and the strength of interaction is influenced by the length of the poly-Gln region in ATXN1. A weaker interaction seen with mutants having longer poly-Gln regions. Interacts with KIAA1530/UVSSA. Interacts with ABRAXAS2; the interaction is direct. Identified in a complex with TP53/p53 and ABRAXAS2. Interacts with MEX3C and antagonizes its ability to degrade mRNA. Interacts with DNMT1 and UHRF1. Interacts with FOXP3. Interacts (via MATH domain) with RNF220. Associated component of the Polycomb group (PcG) multiprotein PRC1-like complex. Interacts with EPOP. Interacts with OTUD4 and USP9X; the interaction is direct. Interacts with CRY2. Interacts with REST. Interacts with ERCC6. Part of a complex consisting of USP7, MAGEL2 and TRIM27; directly interacts with MAGEL2; directly interacts with TRIM27. In terms of assembly, (Microbial infection) Isoform 1 and isoform 2 interact with herpesvirus 1 trans-acting transcriptional protein ICP0/VMW110. Binding to ICP0/VMW110 may modulate the substrate specificity or activity of USP7 to stabilize viral proteins. (Microbial infection) Interacts with Epstein-Barr virus EBNA1; the interaction is independent and simultaneous to EBNA1 interaction with USP7 as well as necessary for PML nuclear bodies disruption by EBNA1. EBNA1, USP7 and CSNK2B form a ternary complex. EBNA1 shows a 10-fold higher affinity than p53/TP53 and can compete with it for USP7 binding. As to quaternary structure, (Microbial infection) Interacts with human cytomegalovirus proteins UL35 and UL35A; these interactions inhibit the ability of USP7 to form nuclear bodies. In terms of assembly, (Microbial infection) Interacts with herpes virus 8/HHV-8 proteins vIRF-1 and vIRF-3; these interactions may disrupt TP53 signaling pathway during viral infection by decreasing the availability of USP7 for deubiquitinating and stabilizing TP53. (Microbial infection) Interacts with herpes virus 8/HHV-8 protein vIRF-2; this interaction modulates antiviral signaling via disruption of USP7 interactions with innate immune signaling proteins TRAF3 and TRAF6 thus affecting their ubiquitination. Isoform 1: Phosphorylated. Isoform 1 is phosphorylated at positions Ser-18 and Ser-963. Isoform 2: Not phosphorylated. In terms of processing, isoform 1: Polyneddylated. Isoform 2: Not Polyneddylated. Post-translationally, isoform 1 and isoform 2: Not sumoylated. Isoform 1 and isoform 2: Polyubiquitinated by herpesvirus 1 trans-acting transcriptional protein ICP0/VMW110; leading to its subsequent proteasomal degradation. Isoform 1: Ubiquitinated at Lys-869. As to expression, expressed in neural progenitor cells (at protein level). Widely expressed. Overexpressed in prostate cancer.

Its subcellular location is the nucleus. It localises to the cytoplasm. The protein localises to the PML body. It is found in the chromosome. It catalyses the reaction Thiol-dependent hydrolysis of ester, thioester, amide, peptide and isopeptide bonds formed by the C-terminal Gly of ubiquitin (a 76-residue protein attached to proteins as an intracellular targeting signal).. Its activity is regulated as follows. Inhibited by N-ethyl-maleimide (NEM) and divalent cations. Tolerates high concentrations of NaCl but is inhibited at concentrations of 195 mM and higher. Functionally, hydrolase that deubiquitinates target proteins such as ARMC5, FOXO4, DEPTOR, KAT5, p53/TP53, MDM2, ERCC6, DNMT1, UHRF1, PTEN, KMT2E/MLL5 and DAXX. Together with DAXX, prevents MDM2 self-ubiquitination and enhances the E3 ligase activity of MDM2 towards p53/TP53, thereby promoting p53/TP53 ubiquitination and proteasomal degradation. Deubiquitinates p53/TP53, preventing degradation of p53/TP53, and enhances p53/TP53-dependent transcription regulation, cell growth repression and apoptosis. Deubiquitinates p53/TP53 and MDM2 and strongly stabilizes p53/TP53 even in the presence of excess MDM2, and also induces p53/TP53-dependent cell growth repression and apoptosis. Deubiquitination of FOXO4 in presence of hydrogen peroxide is not dependent on p53/TP53 and inhibits FOXO4-induced transcriptional activity. In association with DAXX, is involved in the deubiquitination and translocation of PTEN from the nucleus to the cytoplasm, both processes that are counteracted by PML. Deubiquitinates KMT2E/MLL5 preventing KMT2E/MLL5 proteasomal-mediated degradation. Involved in cell proliferation during early embryonic development. Involved in transcription-coupled nucleotide excision repair (TC-NER) in response to UV damage: recruited to DNA damage sites following interaction with KIAA1530/UVSSA and promotes deubiquitination of ERCC6, preventing UV-induced degradation of ERCC6. Involved in maintenance of DNA methylation via its interaction with UHRF1 and DNMT1: acts by mediating deubiquitination of UHRF1 and DNMT1, preventing their degradation and promoting DNA methylation by DNMT1. Deubiquitinates alkylation repair enzyme ALKBH3. OTUD4 recruits USP7 and USP9X to stabilize ALKBH3, thereby promoting the repair of alkylated DNA lesions. Acts as a chromatin regulator via its association with the Polycomb group (PcG) multiprotein PRC1-like complex; may act by deubiquitinating components of the PRC1-like complex. Able to mediate deubiquitination of histone H2B; it is however unsure whether this activity takes place in vivo. Exhibits a preference towards 'Lys-48'-linked ubiquitin chains. Increases regulatory T-cells (Treg) suppressive capacity by deubiquitinating and stabilizing the transcription factor FOXP3 which is crucial for Treg cell function. Plays a role in the maintenance of the circadian clock periodicity via deubiquitination and stabilization of the CRY1 and CRY2 proteins. Deubiquitinates REST, thereby stabilizing REST and promoting the maintenance of neural progenitor cells. Deubiquitinates SIRT7, inhibiting SIRT7 histone deacetylase activity and regulating gluconeogenesis. Involved in the regulation of WASH-dependent actin polymerization at the surface of endosomes and the regulation of endosomal protein recycling. It maintains optimal WASH complex activity and precise F-actin levels via deubiquitination of TRIM27 and WASHC1. Mediates the deubiquitination of phosphorylated DEPTOR, promoting its stability and leading to decreased mTORC1 signaling. (Microbial infection) Contributes to the overall stabilization and trans-activation capability of the herpesvirus 1 trans-acting transcriptional protein ICP0/VMW110 during HSV-1 infection. Its function is as follows. (Microbial infection) Upon infection with Epstein-Barr virus, the interaction with viral EBNA1 increases the association of USP7 with PML proteins, which is required for the polyubiquitylation and degradation of PML. The protein is Ubiquitin carboxyl-terminal hydrolase 7 of Homo sapiens (Human).